The sequence spans 147 residues: MVASRAPRSESPWLKKPMHGVSGSTAMASTPWSSMPPSSHSLGAQSQLVCSGCRNLLMYPAGATSICCAVCGTVTAVPAPEQKSSCNVHENKERLKGNTNGFRAPQRCARRVDGACTQVAREVHTEVALVIFTLLCVTLPGLLFSLG.

Residues 1-38 are disordered; the sequence is MVASRAPRSESPWLKKPMHGVSGSTAMASTPWSSMPPS. Residues 22-38 are compositionally biased toward polar residues; the sequence is SGSTAMASTPWSSMPPS. Residues 47-77 form a putative zinc finger region; it reads QLVCSGCRNLLMYPAGATSICCAVCGTVTAV.

It localises to the nucleus. In terms of biological role, putative zinc finger that may be involved in programmed cell death and defense response. The polypeptide is Protein LOL1 (LOL1) (Oryza sativa subsp. japonica (Rice)).